The sequence spans 923 residues: Protocadherin gamma-B4 (923 aa).

An N-terminal signal peptide occupies residues 1 to 30; sequence MGSGAGELGRAERLPVLFLFLLSLFCPALC. 6 Cadherin domains span residues 31–133, 134–242, 243–345, 346–450, 451–560, and 568–673; these read EQIR…TPKF, TQNS…APVF, SQDI…APEV, IFQS…APVF, SQSS…APRV, and DGSA…LPDI. Topologically, residues 31–689 are extracellular; that stretch reads EQIRYRIPEE…SDLEAELQFY (659 aa). 2 N-linked (GlcNAc...) asparagine glycosylation sites follow: Asn-417 and Asn-543. The chain crosses the membrane as a helical span at residues 690–710; the sequence is LVVALALISVLFLVAMILAIA. Topologically, residues 711-923 are cytoplasmic; it reads LRLRRSSSPA…KKKSGKKEKK (213 aa). 2 disordered regions span residues 797 to 832 and 893 to 923; these read SHQQ…WPNN and ATLT…KEKK. A compositionally biased stretch (basic residues) spans 913–923; it reads NKKKSGKKEKK.

It localises to the cell membrane. Functionally, potential calcium-dependent cell-adhesion protein. May be involved in the establishment and maintenance of specific neuronal connections in the brain. The chain is Protocadherin gamma-B4 (PCDHGB4) from Pan troglodytes (Chimpanzee).